The sequence spans 267 residues: Phosphatidylglycerol--prolipoprotein diacylglyceryl transferase (267 aa).

The next 3 membrane-spanning stretches (helical) occupy residues 18 to 38 (LSVR…MWFA), 57 to 77 (FLFY…VLFY), and 95 to 115 (GGMS…IFAW). R140 lines the a 1,2-diacyl-sn-glycero-3-phospho-(1'-sn-glycerol) pocket. The next 3 helical transmembrane spans lie at 173–193 (SQLY…QWFI), 200–220 (GSVA…IEYF), and 233–253 (FISM…GLLI).

This sequence belongs to the Lgt family.

It localises to the cell inner membrane. The catalysed reaction is L-cysteinyl-[prolipoprotein] + a 1,2-diacyl-sn-glycero-3-phospho-(1'-sn-glycerol) = an S-1,2-diacyl-sn-glyceryl-L-cysteinyl-[prolipoprotein] + sn-glycerol 1-phosphate + H(+). It functions in the pathway protein modification; lipoprotein biosynthesis (diacylglyceryl transfer). Functionally, catalyzes the transfer of the diacylglyceryl group from phosphatidylglycerol to the sulfhydryl group of the N-terminal cysteine of a prolipoprotein, the first step in the formation of mature lipoproteins. The protein is Phosphatidylglycerol--prolipoprotein diacylglyceryl transferase of Pseudoalteromonas translucida (strain TAC 125).